A 380-amino-acid polypeptide reads, in one-letter code: Chaperone protein DnaJ (380 aa).

Residues 6-71 (DYYESLEVSR…QKRAAYDRYG (66 aa)) enclose the J domain. The segment at 136–215 (GVTKDVEVRT…CHGTGTEAKT (80 aa)) adopts a CR-type zinc-finger fold. Zn(2+)-binding residues include Cys-149, Cys-152, Cys-167, Cys-170, Cys-189, Cys-192, Cys-203, and Cys-206. CXXCXGXG motif repeat units lie at residues 149-156 (CEACHGSG), 167-174 (CPTCHGAG), 189-196 (CPTCHGSG), and 203-210 (CKVCHGTG).

It belongs to the DnaJ family. In terms of assembly, homodimer. Requires Zn(2+) as cofactor.

It is found in the cytoplasm. Participates actively in the response to hyperosmotic and heat shock by preventing the aggregation of stress-denatured proteins and by disaggregating proteins, also in an autonomous, DnaK-independent fashion. Unfolded proteins bind initially to DnaJ; upon interaction with the DnaJ-bound protein, DnaK hydrolyzes its bound ATP, resulting in the formation of a stable complex. GrpE releases ADP from DnaK; ATP binding to DnaK triggers the release of the substrate protein, thus completing the reaction cycle. Several rounds of ATP-dependent interactions between DnaJ, DnaK and GrpE are required for fully efficient folding. Also involved, together with DnaK and GrpE, in the DNA replication of plasmids through activation of initiation proteins. The polypeptide is Chaperone protein DnaJ (Gluconobacter oxydans (strain 621H) (Gluconobacter suboxydans)).